The following is a 128-amino-acid chain: Large ribosomal subunit protein eL22 (128 aa).

It belongs to the eukaryotic ribosomal protein eL22 family. As to quaternary structure, component of the large ribosomal subunit.

The protein resides in the cytoplasm. Functionally, component of the large ribosomal subunit. The ribosome is a large ribonucleoprotein complex responsible for the synthesis of proteins in the cell. The sequence is that of Large ribosomal subunit protein eL22 (RPL22) from Gallus gallus (Chicken).